We begin with the raw amino-acid sequence, 132 residues long: ATP synthase epsilon chain (132 aa).

This sequence belongs to the ATPase epsilon chain family. In terms of assembly, F-type ATPases have 2 components, CF(1) - the catalytic core - and CF(0) - the membrane proton channel. CF(1) has five subunits: alpha(3), beta(3), gamma(1), delta(1), epsilon(1). CF(0) has three main subunits: a, b and c.

It is found in the cell inner membrane. Its function is as follows. Produces ATP from ADP in the presence of a proton gradient across the membrane. The polypeptide is ATP synthase epsilon chain (atpC) (Aquifex aeolicus (strain VF5)).